A 198-amino-acid polypeptide reads, in one-letter code: ADP-ribosylation factor-like protein 3 (198 aa).

At Met-1 the chain carries N-acetylmethionine. Position 24–31 (Gly-24–Thr-31) interacts with GTP. Lys-50 is covalently cross-linked (Glycyl lysine isopeptide (Lys-Gly) (interchain with G-Cter in ubiquitin)). GTP contacts are provided by residues Asp-74–Gln-78 and Asn-133–Asp-136.

Belongs to the small GTPase superfamily. Arf family. Interacts with SYS1 and SLO1.

It is found in the golgi apparatus. In terms of biological role, involved in the targeting of ARL1 to the Golgi. Can bind and hydrolyze GTP. The polypeptide is ADP-ribosylation factor-like protein 3 (ARL3) (Saccharomyces cerevisiae (strain ATCC 204508 / S288c) (Baker's yeast)).